The primary structure comprises 430 residues: CC-adding tRNA nucleotidyltransferase (430 aa).

33-36 (GCVR) is a binding site for CTP. Asp-46 and Asp-48 together coordinate Mg(2+). CTP is bound by residues 108–109 (RD), Asn-113, 150–159 (DPLRIVRAYR), and Arg-190.

Belongs to the tRNA nucleotidyltransferase/poly(A) polymerase family. Requires Mg(2+) as cofactor.

It carries out the reaction a tRNA precursor + 2 CTP = a tRNA with a 3' CC end + 2 diphosphate. In terms of biological role, tRNA nucleotidyltransferase involved in the synthesis of the tRNA CCA terminus. Adds the two cytidine residues to tRNA. This chain is CC-adding tRNA nucleotidyltransferase, found in Geobacter sulfurreducens (strain ATCC 51573 / DSM 12127 / PCA).